The chain runs to 79 residues: Sulfur carrier protein TusA (79 aa).

Cysteine 17 acts as the Cysteine persulfide intermediate in catalysis.

This sequence belongs to the sulfur carrier protein TusA family.

The protein localises to the cytoplasm. In terms of biological role, sulfur carrier protein which probably makes part of a sulfur-relay system. The protein is Sulfur carrier protein TusA of Actinobacillus pleuropneumoniae serotype 7 (strain AP76).